Consider the following 333-residue polypeptide: MYLVAFMLLAILPTGYCQLNTLAVRAGKKYFGTATDNPELGDAPYVAQLGNTADFNQITAGNSMKWDATEPSRGTFTFSNGDTVANMARNRGQLLRGHTCVWHSQLPNWVTSGNFDNSTLLSIVQNHCSTLVSHYRGQMYSWDVVNEPFNEDGSFRQSVFFQKTGTAYIATALRAARNADPNTKLYINDFNIEGTGAKSTGMINLVRSLQQQNVPIDGIGVQAHLIVGQIPSSIQQNLQNFANLGVEVAITELDIRMTLPVTQQKLEQQQEDYRTVIRACKAVSRCVGVTVWDWTDRYSWVPGVFNGEGAACPWDENLAKKPAYQGIVDGWSQ.

Positions 1–17 (MYLVAFMLLAILPTGYC) are cleaved as a signal peptide. The GH10 domain occupies 18 to 330 (QLNTLAVRAG…KPAYQGIVDG (313 aa)). The active-site Proton donor is Glu-147. Residue Glu-252 is the Nucleophile of the active site.

This sequence belongs to the glycosyl hydrolase 10 (cellulase F) family.

Its subcellular location is the secreted. The catalysed reaction is Endohydrolysis of (1-&gt;4)-beta-D-xylosidic linkages in xylans.. It functions in the pathway glycan degradation; xylan degradation. Has xylanase activity. Seems to be involved in the release of sugars from the hemicellulolytic fraction in the compost. The polypeptide is Endo-1,4-beta-xylanase (xlnA) (Agaricus bisporus (White button mushroom)).